The chain runs to 248 residues: Geranylgeranylglyceryl phosphate synthase (248 aa).

Asp25 and Ser50 together coordinate Mg(2+). Sn-glycerol 1-phosphate-binding positions include 170–176 (YLEAGSG), 201–202 (GG), and 223–224 (GT).

The protein belongs to the GGGP/HepGP synthase family. Group II subfamily. Mg(2+) serves as cofactor.

The protein localises to the cytoplasm. It catalyses the reaction sn-glycerol 1-phosphate + (2E,6E,10E)-geranylgeranyl diphosphate = sn-3-O-(geranylgeranyl)glycerol 1-phosphate + diphosphate. It participates in membrane lipid metabolism; glycerophospholipid metabolism. In terms of biological role, prenyltransferase that catalyzes the transfer of the geranylgeranyl moiety of geranylgeranyl diphosphate (GGPP) to the C3 hydroxyl of sn-glycerol-1-phosphate (G1P). This reaction is the first ether-bond-formation step in the biosynthesis of archaeal membrane lipids. In Methanococcus aeolicus (strain ATCC BAA-1280 / DSM 17508 / OCM 812 / Nankai-3), this protein is Geranylgeranylglyceryl phosphate synthase.